The sequence spans 484 residues: Dynein regulatory complex subunit 2 (484 aa).

2 coiled-coil regions span residues V92–I160 and K374–N403.

This sequence belongs to the DRC2 family. In terms of assembly, component of the nexin-dynein regulatory complex (N-DRC). Interacts with DRC1.

The protein resides in the cytoplasm. Its subcellular location is the cytoskeleton. It is found in the flagellum basal body. It localises to the cell projection. The protein localises to the cilium. The protein resides in the flagellum. Its subcellular location is the flagellum axoneme. Component of the nexin-dynein regulatory complex (N-DRC), a key regulator of ciliary/flagellar motility which maintains the alignment and integrity of the distal axoneme and regulates microtubule sliding in motile axonemes. Plays a critical role in the assembly of N-DRC and also stabilizes the assembly of multiple inner dynein arms and radial spokes. Coassembles with DRC1 to form a central scaffold needed for assembly of the N-DRC and its attachment to the outer doublet microtubules. The sequence is that of Dynein regulatory complex subunit 2 (CCDC65) from Macaca fascicularis (Crab-eating macaque).